Here is a 169-residue protein sequence, read N- to C-terminus: NADH-quinone oxidoreductase subunit B (169 aa).

Residues C42, C43, C107, and C136 each coordinate [4Fe-4S] cluster.

Belongs to the complex I 20 kDa subunit family. As to quaternary structure, NDH-1 is composed of 14 different subunits. Subunits NuoB, C, D, E, F, and G constitute the peripheral sector of the complex. The cofactor is [4Fe-4S] cluster.

It localises to the cell inner membrane. It catalyses the reaction a quinone + NADH + 5 H(+)(in) = a quinol + NAD(+) + 4 H(+)(out). In terms of biological role, NDH-1 shuttles electrons from NADH, via FMN and iron-sulfur (Fe-S) centers, to quinones in the respiratory chain. Couples the redox reaction to proton translocation (for every two electrons transferred, four hydrogen ions are translocated across the cytoplasmic membrane), and thus conserves the redox energy in a proton gradient. This Campylobacter hominis (strain ATCC BAA-381 / DSM 21671 / CCUG 45161 / LMG 19568 / NCTC 13146 / CH001A) protein is NADH-quinone oxidoreductase subunit B.